A 619-amino-acid chain; its full sequence is Guanylate cyclase soluble subunit beta-1 (619 aa).

Histidine 105 is a heme binding site. A Guanylate cyclase domain is found at 421–554; that stretch reads TILFSGIVGF…NTVNLTSRTE (134 aa).

This sequence belongs to the adenylyl cyclase class-4/guanylyl cyclase family. In terms of assembly, the active enzyme is formed by a heterodimer of an alpha and a beta subunit. Heterodimer with GUCY1A1. Can also form inactive homodimers in vitro. The cofactor is heme. As to expression, detected in brain cortex and cerebellum (at protein level).

Its subcellular location is the cytoplasm. The enzyme catalyses GTP = 3',5'-cyclic GMP + diphosphate. Activated by nitric oxide in the presence of magnesium or manganese ions. Mediates responses to nitric oxide (NO) by catalyzing the biosynthesis of the signaling molecule cGMP. The polypeptide is Guanylate cyclase soluble subunit beta-1 (Homo sapiens (Human)).